The sequence spans 85 residues: N.vectensis toxin 1 5 (85 aa).

Residues 1–20 (MASFKIVIVCLALLVAVACA) form the signal peptide. The propeptide occupies 21 to 36 (RRRDMMSDDELDFHLS). 3 disulfide bridges follow: Cys42–Cys82, Cys44–Cys72, and Cys65–Cys83.

This sequence belongs to the sea anemone sodium channel inhibitory toxin family. Type II subfamily. As to expression, expressed in ectodermal glands and in clumps outside of the extodermal layer. Is not expressed in nematocytes. In adult female tissues, shows similar expression levels in mesenteries (gametes-producing tissue), tentacles, pharynx and physa.

It is found in the secreted. Functionally, binds to site 3 of voltage-gated sodium channels and inhibits the inactivation process. Is highly active on DmNav1/TipE (drosophila) and is only extremely weakly active on rat Nav1.4-beta-1/SCN4A-SCN1B, and on human Nav1.5-beta-1/SCN5A-beta-1. This reveals high specificity for arthropod over mammalian channels. In vivo, when released into the medium, this recombinant toxin induces impaired swimming, paralysis and death of the crustacean A.nauplii within several hours. Also causes paralysis of cherry shrimps immediately after injection at very low doses. Its effect on zebrafish (D.rerio) larvae is also rapid, since it induces tail twitching accompanied by impaired swimming after 20 minutes and complete paralysis within 45 minutes. It has also been observed to cause death of zebrafish larvae within 1 hour. The polypeptide is N.vectensis toxin 1 5 (Nematostella vectensis (Starlet sea anemone)).